The sequence spans 637 residues: Phospholipase B (637 aa).

The first 19 residues, 1–19 (MSIATATFAFSLFATIAFA), serve as a signal peptide directing secretion. The PLA2c domain occupies 46–572 (DCPSNVTWIR…DTWCWAGDDN (527 aa)). N-linked (GlcNAc...) asparagine glycans are attached at residues Asn-50, Asn-56, Asn-122, Asn-231, Asn-246, Asn-272, Asn-314, Asn-343, Asn-387, Asn-433, Asn-481, Asn-501, Asn-528, Asn-553, Asn-572, Asn-594, and Asn-606.

The protein belongs to the lysophospholipase family. N-glycosylated.

The protein resides in the secreted. Its subcellular location is the cell membrane. The catalysed reaction is a 1-acyl-sn-glycero-3-phosphocholine + H2O = sn-glycerol 3-phosphocholine + a fatty acid + H(+). Inhibited by Fe(3+) ion. Its function is as follows. Exhibits phospholipase B (PLB), lysophospholipase (LPL) and lysophospholipase/transacylase (LPTA) activities. The polypeptide is Phospholipase B (PLB1) (Cryptococcus neoformans var. grubii serotype A (strain H99 / ATCC 208821 / CBS 10515 / FGSC 9487) (Filobasidiella neoformans var. grubii)).